The sequence spans 875 residues: E3 SUMO-protein ligase SIZ1 (875 aa).

In terms of domain architecture, SAP spans 12-46 (LAYFRIKELKDILNQLGLPKQGKKQDLIDRVLALL). A PHD-type zinc finger spans residues 114–169 (KVRCICSSTMVNDSMIQCEDQRCQVWQHLNCVLIPDKPGESAEVPPVFYCELCRLS). Residues 349-430 (SDLEVVAESV…FNRITSLLRN (82 aa)) form an SP-RING-type zinc finger. Zn(2+) is bound by residues cysteine 380, histidine 382, cysteine 403, and cysteine 406. A disordered region spans residues 796-820 (GGGGNEEPAPADVNSQPQIPSTETG). Over residues 808 to 819 (VNSQPQIPSTET) the composition is skewed to polar residues.

It belongs to the PIAS family.

The protein resides in the nucleus. Its pathway is protein modification; protein sumoylation. Functionally, probable SUMO E3 ligase that may regulate Pi starvation responses. The protein is E3 SUMO-protein ligase SIZ1 (SIZ1) of Oryza sativa subsp. japonica (Rice).